The chain runs to 539 residues: GMP synthase [glutamine-hydrolyzing] (539 aa).

The region spanning 4–203 is the Glutamine amidotransferase type-1 domain; it reads KILILDFGSQ…VHDICGCKSD (200 aa). Cysteine 82 (nucleophile) is an active-site residue. Residues histidine 177 and glutamate 179 contribute to the active site. One can recognise a GMPS ATP-PPase domain in the interval 204–395; that stretch reads WNMPDYIAEA…LGLPHDMVYR (192 aa). Residue 231 to 237 participates in ATP binding; that stretch reads SGGVDSS.

Homodimer.

The catalysed reaction is XMP + L-glutamine + ATP + H2O = GMP + L-glutamate + AMP + diphosphate + 2 H(+). It functions in the pathway purine metabolism; GMP biosynthesis; GMP from XMP (L-Gln route): step 1/1. Its function is as follows. Catalyzes the synthesis of GMP from XMP. This is GMP synthase [glutamine-hydrolyzing] from Janthinobacterium sp. (strain Marseille) (Minibacterium massiliensis).